The chain runs to 874 residues: Alanine--tRNA ligase (874 aa).

Zn(2+) is bound by residues His562, His566, Cys664, and His668.

This sequence belongs to the class-II aminoacyl-tRNA synthetase family. Requires Zn(2+) as cofactor.

The protein localises to the cytoplasm. The catalysed reaction is tRNA(Ala) + L-alanine + ATP = L-alanyl-tRNA(Ala) + AMP + diphosphate. In terms of biological role, catalyzes the attachment of alanine to tRNA(Ala) in a two-step reaction: alanine is first activated by ATP to form Ala-AMP and then transferred to the acceptor end of tRNA(Ala). Also edits incorrectly charged Ser-tRNA(Ala) and Gly-tRNA(Ala) via its editing domain. The sequence is that of Alanine--tRNA ligase from Neisseria meningitidis serogroup A / serotype 4A (strain DSM 15465 / Z2491).